The sequence spans 255 residues: MKIGVFDSGVGGFSVLKSLLKAQLFDEIIYYGDSARVPYGTKDPTTIKQFGLEALDFFKPHKIELLIVACNTASALALEEMQKHSKIPIVGVIGPSILAIKQQVKDKNAPILVLGTKATIQSNAYDNALKQQGYLNVSHLATSLFVPLIEENILEGELLETCMRYYFTPLEILPEVVILGCTHFPLIAHQIEGYFMEHFALSTPPLLIHSGDAIVEYLQQKYALKKNACAFPKVEFHASGDVVWLEKQAKEWLKL.

Substrate contacts are provided by residues 7–8 (DS) and 39–40 (YG). Residue Cys70 is the Proton donor/acceptor of the active site. 71–72 (NT) is a binding site for substrate. Cys181 serves as the catalytic Proton donor/acceptor. Position 182–183 (182–183 (TH)) interacts with substrate.

The protein belongs to the aspartate/glutamate racemases family.

The catalysed reaction is L-glutamate = D-glutamate. Its pathway is cell wall biogenesis; peptidoglycan biosynthesis. Functionally, provides the (R)-glutamate required for cell wall biosynthesis. This is Glutamate racemase from Helicobacter pylori (strain Shi470).